A 591-amino-acid polypeptide reads, in one-letter code: Cytidine monophosphate-N-acetylneuraminic acid hydroxylase (591 aa).

Positions 16–114 (LASAEVESLK…IENDDENGVS (99 aa)) constitute a Rieske domain. Positions 56, 58, 77, and 80 each coordinate [2Fe-2S] cluster.

This sequence belongs to the CMP-Neu5Ac hydroxylase family. Requires [2Fe-2S] cluster as cofactor.

It is found in the cytoplasm. The catalysed reaction is CMP-N-acetyl-beta-neuraminate + 2 Fe(II)-[cytochrome b5] + O2 + 2 H(+) = CMP-N-glycoloyl-beta-neuraminate + 2 Fe(III)-[cytochrome b5] + H2O. Its pathway is amino-sugar metabolism; N-acetylneuraminate metabolism. Its function is as follows. Sialic acids are components of carbohydrate chains of glycoconjugates and are involved in cell-cell recognition and cell-pathogen interactions. Catalyzes the conversion of CMP-N-acetylneuraminic acid (CMP-Neu5Ac) into its hydroxylated derivative CMP-N-glycolylneuraminic acid (CMP-Neu5Gc), a sialic acid abundantly expressed at the surface of many cells. This Xenopus laevis (African clawed frog) protein is Cytidine monophosphate-N-acetylneuraminic acid hydroxylase (cmah).